A 546-amino-acid chain; its full sequence is ATP-dependent RNA helicase DBP2 (546 aa).

The tract at residues 1–56 (MTYGGRDQQYNKTNYKSRGGDFRGGRNSDRNSYNDRPQGGNYRGGFGGRSNYNQPQ) is disordered. Omega-N-methylarginine is present on residues Arg18 and Arg43. The segment covering 18-33 (RGGDFRGGRNSDRNSY) has biased composition (basic and acidic residues). Phosphoserine is present on residues Ser88 and Ser90. Positions 113–141 (TTFDEAGFPDYVLNEVKAEGFDKPTGIQC) match the Q motif motif. In terms of domain architecture, Helicase ATP-binding spans 144-319 (WPMALSGRDM…ADYLNDPIQV (176 aa)). 157–164 (AATGSGKT) serves as a coordination point for ATP. Positions 267-270 (DEAD) match the DEAD box motif. Positions 347 to 494 (RLNKYLETAS…NIPPELLKYD (148 aa)) constitute a Helicase C-terminal domain. Lys474 participates in a covalent cross-link: Glycyl lysine isopeptide (Lys-Gly) (interchain with G-Cter in ubiquitin). Residues 493-546 (YDRRSYGGGHPRYGGGRGGRGGYGRRGGYGGGRGGYGGNRQRDGGWGNRGRSNY) are disordered. Residues 498–540 (YGGGHPRYGGGRGGRGGYGRRGGYGGGRGGYGGNRQRDGGWGN) are compositionally biased toward gly residues. The tract at residues 505-530 (YGGGRGGRGGYGRRGGYGGGRGGYGG) is RNA-binding RGG-box. 4 positions are modified to dimethylated arginine; alternate: Arg509, Arg512, Arg518, and Arg525. Arg509, Arg512, Arg518, and Arg525 each carry omega-N-methylarginine; alternate.

The protein belongs to the DEAD box helicase family. DDX5/DBP2 subfamily. In terms of assembly, interacts with UPF1. Associates with polysomes.

The protein resides in the cytoplasm. It localises to the nucleus. The catalysed reaction is ATP + H2O = ADP + phosphate + H(+). ATP-dependent RNA helicase involved nonsense-mediated mRNA decay and ribosome biogenesis through rRNA processing. Associates directly with chromatin, correlating with transcriptional activity. Required for assembly of mRNA-binding proteins YRA1, NAB2, and MEX67 onto poly(A)+ RNA. The polypeptide is ATP-dependent RNA helicase DBP2 (Saccharomyces cerevisiae (strain ATCC 204508 / S288c) (Baker's yeast)).